The chain runs to 236 residues: EEF1A lysine methyltransferase 2 (236 aa).

Positions 1-11 (MSSGADGGGGA) are enriched in gly residues. The disordered stretch occupies residues 1–31 (MSSGADGGGGAAVAARSDKGSPGEDGFVPSA). The residue at position 2 (Ser2) is an N-acetylserine. At Ser21 the chain carries Phosphoserine.

This sequence belongs to the class I-like SAM-binding methyltransferase superfamily. EFM4 family.

It localises to the cytoplasm. The protein resides in the nucleus. The catalysed reaction is L-lysyl-[protein] + 3 S-adenosyl-L-methionine = N(6),N(6),N(6)-trimethyl-L-lysyl-[protein] + 3 S-adenosyl-L-homocysteine + 3 H(+). Its function is as follows. Protein-lysine methyltransferase that selectively catalyzes the trimethylation of EEF1A at 'Lys-318'. The sequence is that of EEF1A lysine methyltransferase 2 from Homo sapiens (Human).